The following is a 352-amino-acid chain: 3-isopropylmalate dehydrogenase (352 aa).

Residue 76 to 89 participates in NAD(+) binding; that stretch reads GYKWENLPHDKKPE. The substrate site is built by arginine 96, arginine 106, arginine 134, and aspartate 220. Residues aspartate 220, aspartate 244, and aspartate 248 each coordinate Mg(2+). 277–289 is an NAD(+) binding site; the sequence is GSAPDIAGQNKAN.

Belongs to the isocitrate and isopropylmalate dehydrogenases family. LeuB type 1 subfamily. Homodimer. Requires Mg(2+) as cofactor. It depends on Mn(2+) as a cofactor.

It is found in the cytoplasm. It catalyses the reaction (2R,3S)-3-isopropylmalate + NAD(+) = 4-methyl-2-oxopentanoate + CO2 + NADH. It participates in amino-acid biosynthesis; L-leucine biosynthesis; L-leucine from 3-methyl-2-oxobutanoate: step 3/4. In terms of biological role, catalyzes the oxidation of 3-carboxy-2-hydroxy-4-methylpentanoate (3-isopropylmalate) to 3-carboxy-4-methyl-2-oxopentanoate. The product decarboxylates to 4-methyl-2 oxopentanoate. This is 3-isopropylmalate dehydrogenase from Chlorobaculum tepidum (strain ATCC 49652 / DSM 12025 / NBRC 103806 / TLS) (Chlorobium tepidum).